The primary structure comprises 1612 residues: DNA topoisomerase 2-beta (1612 aa).

A2 carries the post-translational modification N-acetylalanine. An N6-acetyllysine modification is found at K3. Glycyl lysine isopeptide (Lys-Gly) (interchain with G-Cter in SUMO2) cross-links involve residues K21 and K22. Residues N100, N129, and 157–159 each bind ATP; that span reads SSN. Residues K165 and K166 each participate in a glycyl lysine isopeptide (Lys-Gly) (interchain with G-Cter in SUMO2) cross-link. An ATP-binding site is contributed by 170 to 177; that stretch reads GRNGYGAK. Glycyl lysine isopeptide (Lys-Gly) (interchain with G-Cter in SUMO2) cross-links involve residues K216 and K287. An interaction with DNA region spans residues 351–353; the sequence is KKK. Residues K355 and K361 each participate in a glycyl lysine isopeptide (Lys-Gly) (interchain with G-Cter in SUMO2) cross-link. 385-387 lines the ATP pocket; that stretch reads QTK. Residues K425, K427, and K434 each participate in a glycyl lysine isopeptide (Lys-Gly) (interchain with G-Cter in SUMO2) cross-link. In terms of domain architecture, Toprim spans 464-581; the sequence is CTLILTEGDS…SLLKHGFLEE (118 aa). Mg(2+)-binding residues include E470, D550, and D552. Glycyl lysine isopeptide (Lys-Gly) (interchain with G-Cter in SUMO2) cross-links involve residues K588, K593, K623, K631, K634, K664, and K700. Residues 724–1177 enclose the Topo IIA-type catalytic domain; sequence IPSLVDGFKP…SPSDLWKEDL (454 aa). Y814 (O-(5'-phospho-DNA)-tyrosine intermediate) is an active-site residue. Residues 999 to 1008 are interaction with DNA; it reads KLQTTLTCNS. A Glycyl lysine isopeptide (Lys-Gly) (interchain with G-Cter in SUMO2) cross-link involves residue K1080. Positions 1098–1128 are disordered; sequence AWKEAQEKAAEEEDSQNQHDDSSSDSGTPSG. Glycyl lysine isopeptide (Lys-Gly) (interchain with G-Cter in SUMO2) cross-links involve residues K1202, K1205, K1214, and K1215. S1224 bears the Phosphoserine mark. Residues K1238, K1250, and K1259 each participate in a glycyl lysine isopeptide (Lys-Gly) (interchain with G-Cter in SUMO2) cross-link. Residues 1245–1586 form a disordered region; it reads LLKKKKGDPD…FTSEPPALPR (342 aa). At T1280 the chain carries Phosphothreonine. Residues K1311 and K1315 each participate in a glycyl lysine isopeptide (Lys-Gly) (interchain with G-Cter in SUMO2) cross-link. 2 stretches are compositionally biased toward basic and acidic residues: residues 1322-1332 and 1346-1358; these read PWSDDESKSES and SLLR…RPKY. Phosphoserine occurs at positions 1324, 1328, 1330, 1332, and 1346. Y1358 bears the Phosphotyrosine mark. The span at 1362-1379 shows a compositional bias: acidic residues; that stretch reads FSEEEDDDAAAADDSNDL. S1363 and S1376 each carry phosphoserine. Residue K1385 forms a Glycyl lysine isopeptide (Lys-Gly) (interchain with G-Cter in SUMO2) linkage. At S1387 the chain carries Phosphoserine. T1390 carries the post-translational modification Phosphothreonine. S1400 is modified (phosphoserine). Y1408 carries the phosphotyrosine modification. A Phosphoserine modification is found at S1411. The span at 1417–1429 shows a compositional bias: basic and acidic residues; that stretch reads ATPEKSSNDKKSQ. K1427 is covalently cross-linked (Glycyl lysine isopeptide (Lys-Gly) (interchain with G-Cter in SUMO2)). Phosphoserine is present on residues S1428, S1439, and S1441. K1443 participates in a covalent cross-link: Glycyl lysine isopeptide (Lys-Gly) (interchain with G-Cter in SUMO2). Positions 1443–1453 are enriched in basic and acidic residues; sequence KSEDDSAKFDS. 3 positions are modified to phosphoserine: S1448, S1453, and S1460. A Glycyl lysine isopeptide (Lys-Gly) (interchain with G-Cter in SUMO2) cross-link involves residue K1477. The interval 1493–1499 is interaction with PLSCR1; the sequence is KAKRAPK. Residues S1509, S1511, and S1513 each carry the phosphoserine modification. Basic residues predominate over residues 1526–1536; it reads GKGRGAKKRKA. S1537 and S1539 each carry phosphoserine. Basic residues predominate over residues 1550-1561; the sequence is KPSKTASKKPKK. T1562 carries the post-translational modification Phosphothreonine. Phosphoserine is present on residues S1563 and S1568. Y1596 carries the phosphotyrosine modification. S1600 carries the post-translational modification Phosphoserine.

It belongs to the type II topoisomerase family. As to quaternary structure, homodimer. Interacts with KIAA1210. Interacts with PLSCR1. The cofactor is Mg(2+). It depends on Mn(2+) as a cofactor. Requires Ca(2+) as cofactor.

Its subcellular location is the nucleus. The protein localises to the nucleolus. It localises to the nucleoplasm. It catalyses the reaction ATP-dependent breakage, passage and rejoining of double-stranded DNA.. Functionally, key decatenating enzyme that alters DNA topology by binding to two double-stranded DNA molecules, generating a double-stranded break in one of the strands, passing the intact strand through the broken strand, and religating the broken strand. Plays a role in B-cell differentiation. This Mus musculus (Mouse) protein is DNA topoisomerase 2-beta (Top2b).